Consider the following 513-residue polypeptide: Activin receptor type-2A (513 aa).

A signal peptide spans 1 to 19 (MGAAAKLAFAVFLISCSSG). Over 20-135 (AILGRSETQE…TSNPVTPKPP (116 aa)) the chain is Extracellular. Disulfide bonds link C30/C60, C50/C78, C85/C104, C91/C103, and C105/C110. N-linked (GlcNAc...) asparagine glycosylation is found at N43 and N66. The helical transmembrane segment at 136–161 (YYNILLYSLVPLMLVAGIVICAFWVY) threads the bilayer. Over 162-513 (RHHKMAYPPV…VDFPPKESSL (352 aa)) the chain is Cytoplasmic. Positions 192-485 (LQLLEVKARG…GERITQMQRL (294 aa)) constitute a Protein kinase domain. ATP-binding positions include 198-206 (KARGGFGCV) and K219. Catalysis depends on D322, which acts as the Proton acceptor.

This sequence belongs to the protein kinase superfamily. TKL Ser/Thr protein kinase family. TGFB receptor subfamily. Part of a complex consisting of MAGI2/ARIP1, ACVR2A, ACVR1B and SMAD3. Interacts with MAGI2/ARIP1. Interacts with type I receptor ACVR1. Interacts with TSC22D1/TSC-22. Interacts with activin A/INHBA. The cofactor is Mg(2+). Mn(2+) is required as a cofactor.

The protein localises to the cell membrane. It carries out the reaction L-threonyl-[receptor-protein] + ATP = O-phospho-L-threonyl-[receptor-protein] + ADP + H(+). It catalyses the reaction L-seryl-[receptor-protein] + ATP = O-phospho-L-seryl-[receptor-protein] + ADP + H(+). Its function is as follows. On ligand binding, forms a receptor complex consisting of two type II and two type I transmembrane serine/threonine kinases. Type II receptors phosphorylate and activate type I receptors which autophosphorylate, then bind and activate SMAD transcriptional regulators. Receptor for activin A, activin B and inhibin A. Mediates induction of adipogenesis by GDF6. The polypeptide is Activin receptor type-2A (ACVR2A) (Ovis aries (Sheep)).